A 184-amino-acid chain; its full sequence is MQASQPEVWHGTTILTVRKGGKVVIGGDGQVSIGQTVIKSNAKKVRKLGKGDVIGGFAGATADAFTLFERLESKLEQYPGQLTRAAVELAKDWRTDRYLRRLEAMMLVADKDVSLVLTGTGDVLEPEAGVMAIGSGGNYALSAARALIDSDKDAETIVRRSLDIAADICVYTNRNLTIETLSTD.

The active site involves Thr12. Residues Ala166, Cys169, and Thr172 each contribute to the Na(+) site.

This sequence belongs to the peptidase T1B family. HslV subfamily. In terms of assembly, a double ring-shaped homohexamer of HslV is capped on each side by a ring-shaped HslU homohexamer. The assembly of the HslU/HslV complex is dependent on binding of ATP.

Its subcellular location is the cytoplasm. The catalysed reaction is ATP-dependent cleavage of peptide bonds with broad specificity.. Its activity is regulated as follows. Allosterically activated by HslU binding. Its function is as follows. Protease subunit of a proteasome-like degradation complex believed to be a general protein degrading machinery. This Nitrobacter hamburgensis (strain DSM 10229 / NCIMB 13809 / X14) protein is ATP-dependent protease subunit HslV.